Here is a 315-residue protein sequence, read N- to C-terminus: Protein FRA10AC1 homolog (315 aa).

An N-acetylmethionine modification is found at M1. Positions 1 to 28 (MHGHGGYDSDFSDDEQGGGSSKKRKKTV) are disordered. 2 positions are modified to phosphoserine: S9 and S12. N6-acetyllysine is present on K36. The span at 225 to 235 (KEIKSTKKKSK) shows a compositional bias: basic residues. The tract at residues 225-308 (KEIKSTKKKS…EKSQEEEFDD (84 aa)) is disordered. Composition is skewed to basic and acidic residues over residues 236–245 (TTPECDESPR) and 255–278 (EASKGKDEGHSSSKKSEDSRNRNA). A phosphoserine mark is found at S283 and S285.

In terms of assembly, interacts with ESS2.

The protein resides in the nucleus. In terms of biological role, may be involved in pre-mRNA splicing. This Mus musculus (Mouse) protein is Protein FRA10AC1 homolog (Fra10ac1).